We begin with the raw amino-acid sequence, 215 residues long: Cytochrome b6 (215 aa).

Residues 32–52 (LFYCLGGITLTCFLIQVATGF) form a helical membrane-spanning segment. Cys-35 is a binding site for heme c. Heme b contacts are provided by His-86 and His-100. 3 helical membrane-spanning segments follow: residues 90–110 (ASMM…TGGF), 116–136 (STWV…VTGY), and 186–206 (LHTF…FLMI). The heme b site is built by His-187 and His-202.

This sequence belongs to the cytochrome b family. PetB subfamily. In terms of assembly, the 4 large subunits of the cytochrome b6-f complex are cytochrome b6, subunit IV (17 kDa polypeptide, PetD), cytochrome f and the Rieske protein, while the 4 small subunits are PetG, PetL, PetM and PetN. The complex functions as a dimer. It depends on heme b as a cofactor. Requires heme c as cofactor.

The protein resides in the plastid. Its subcellular location is the chloroplast thylakoid membrane. In terms of biological role, component of the cytochrome b6-f complex, which mediates electron transfer between photosystem II (PSII) and photosystem I (PSI), cyclic electron flow around PSI, and state transitions. This Bigelowiella natans (Pedinomonas minutissima) protein is Cytochrome b6.